Here is a 526-residue protein sequence, read N- to C-terminus: Dolichyl pyrophosphate Glc1Man9GlcNAc2 alpha-1,3-glucosyltransferase (526 aa).

The next 11 membrane-spanning stretches (helical) occupy residues 4-24 (FGIATGGSNWFSALALGVTLL), 103-122 (LLFQRFSVIFTDALFVYAVH), 143-163 (FILSALLLWNFGLLIVDHIHF), 188-208 (GAFLFAVLLHFKHIYLYVAPA), 238-258 (LISLGLIVFLVSALSLGPFLA), 334-354 (PLATFICTLIAMLPSVFCLWC), 368-388 (LCALSSFMFGWHVHEKAILLA), 389-409 (VLPMSLLSVGKAVDASIFLIL), 427-449 (LPIKIILMLLFTIYSISSLKTLF), 461-481 (TFYLLGLGPLEVFCEFVFPFT), and 488-508 (PFIPLLLTSVYCAVGITYAWL).

It belongs to the ALG6/ALG8 glucosyltransferase family.

The protein resides in the endoplasmic reticulum membrane. It carries out the reaction an alpha-D-Glc-(1-&gt;3)-alpha-D-Man-(1-&gt;2)-alpha-D-Man-(1-&gt;2)-alpha-D-Man-(1-&gt;3)-[alpha-D-Man-(1-&gt;2)-alpha-D-Man-(1-&gt;3)-[alpha-D-Man-(1-&gt;2)-alpha-D-Man-(1-&gt;6)]-alpha-D-Man-(1-&gt;6)]-beta-D-Man-(1-&gt;4)-beta-D-GlcNAc-(1-&gt;4)-alpha-D-GlcNAc-diphospho-di-trans,poly-cis-dolichol + a di-trans,poly-cis-dolichyl beta-D-glucosyl phosphate = an alpha-D-Glc-(1-&gt;3)-alpha-D-Glc-(1-&gt;3)-alpha-D-Man-(1-&gt;2)-alpha-D-Man-(1-&gt;2)-alpha-D-Man-(1-&gt;3)-[alpha-D-Man-(1-&gt;2)-alpha-D-Man-(1-&gt;3)-[alpha-D-Man-(1-&gt;2)-alpha-D-Man-(1-&gt;6)]-alpha-D-Man-(1-&gt;6)]-beta-D-Man-(1-&gt;4)-beta-D-GlcNAc-(1-&gt;4)-alpha-D-GlcNAc-diphospho-di-trans,poly-cis-dolichol + a di-trans,poly-cis-dolichyl phosphate + H(+). It functions in the pathway protein modification; protein glycosylation. Dolichyl pyrophosphate Glc1Man9GlcNAc2 alpha-1,3-glucosyltransferase that operates in the biosynthetic pathway of dolichol-linked oligosaccharides, the glycan precursors employed in protein asparagine (N)-glycosylation. The assembly of dolichol-linked oligosaccharides begins on the cytosolic side of the endoplasmic reticulum membrane and finishes in its lumen. The sequential addition of sugars to dolichol pyrophosphate produces dolichol-linked oligosaccharides containing fourteen sugars, including two GlcNAcs, nine mannoses and three glucoses. Once assembled, the oligosaccharide is transferred from the lipid to nascent proteins by oligosaccharyltransferases. In the lumen of the endoplasmic reticulum, adds the second glucose residue from dolichyl phosphate glucose (Dol-P-Glc) onto the lipid-linked oligosaccharide intermediate Glc(1)Man(9)GlcNAc(2)-PP-Dol to produce Glc(2)Man(9)GlcNAc(2)-PP-Dol. Glc(2)Man(9)GlcNAc(2)-PP-Dol is a substrate for ALG10, the following enzyme in the biosynthetic pathway. Required for PKD1/Polycystin-1 maturation and localization to the plasma membrane of the primary cilia. The sequence is that of Dolichyl pyrophosphate Glc1Man9GlcNAc2 alpha-1,3-glucosyltransferase from Bos taurus (Bovine).